The sequence spans 127 residues: Arginine decarboxylase proenzyme (127 aa).

S72 functions as the Schiff-base intermediate with substrate; via pyruvic acid in the catalytic mechanism. Residue S72 is modified to Pyruvic acid (Ser); by autocatalysis. The active-site Proton acceptor; for processing activity is the H77. Residue C92 is the Proton donor; for catalytic activity of the active site.

This sequence belongs to the prokaryotic AdoMetDC family. Type 1 subfamily. As to quaternary structure, heterooctamer of four alpha and four beta chains arranged as a tetramer of alpha/beta heterodimers. It depends on pyruvate as a cofactor. Post-translationally, is synthesized initially as an inactive proenzyme. Formation of the active enzyme involves a self-maturation process in which the active site pyruvoyl group is generated from an internal serine residue via an autocatalytic post-translational modification. Two non-identical subunits are generated from the proenzyme in this reaction, and the pyruvate is formed at the N-terminus of the alpha chain, which is derived from the carboxyl end of the proenzyme. The post-translation cleavage follows an unusual pathway, termed non-hydrolytic serinolysis, in which the side chain hydroxyl group of the serine supplies its oxygen atom to form the C-terminus of the beta chain, while the remainder of the serine residue undergoes an oxidative deamination to produce ammonia and the pyruvoyl group blocking the N-terminus of the alpha chain.

It carries out the reaction L-arginine + H(+) = agmatine + CO2. It participates in amine and polyamine biosynthesis; agmatine biosynthesis; agmatine from L-arginine: step 1/1. Specifically catalyzes the decarboxylation of L-arginine to agmatine. Has no S-adenosylmethionine decarboxylase (AdoMetDC) activity. This chain is Arginine decarboxylase proenzyme, found in Staphylothermus marinus (strain ATCC 43588 / DSM 3639 / JCM 9404 / F1).